Consider the following 529-residue polypeptide: Peptide chain release factor 3 (529 aa).

Positions 11-280 (AKRRTFAIIS…GLIEWAPQPM (270 aa)) constitute a tr-type G domain. Residues 20-27 (SHPDAGKT), 88-92 (DTPGH), and 142-145 (NKLD) contribute to the GTP site.

The protein belongs to the TRAFAC class translation factor GTPase superfamily. Classic translation factor GTPase family. PrfC subfamily.

The protein resides in the cytoplasm. Functionally, increases the formation of ribosomal termination complexes and stimulates activities of RF-1 and RF-2. It binds guanine nucleotides and has strong preference for UGA stop codons. It may interact directly with the ribosome. The stimulation of RF-1 and RF-2 is significantly reduced by GTP and GDP, but not by GMP. The chain is Peptide chain release factor 3 from Enterobacter sp. (strain 638).